We begin with the raw amino-acid sequence, 289 residues long: ATP synthase gamma chain (289 aa).

The protein belongs to the ATPase gamma chain family. In terms of assembly, F-type ATPases have 2 components, CF(1) - the catalytic core - and CF(0) - the membrane proton channel. CF(1) has five subunits: alpha(3), beta(3), gamma(1), delta(1), epsilon(1). CF(0) has three main subunits: a, b and c.

It localises to the cell membrane. In terms of biological role, produces ATP from ADP in the presence of a proton gradient across the membrane. The gamma chain is believed to be important in regulating ATPase activity and the flow of protons through the CF(0) complex. This Lawsonia intracellularis (strain PHE/MN1-00) protein is ATP synthase gamma chain.